A 541-amino-acid polypeptide reads, in one-letter code: Chaperonin GroEL (541 aa).

ATP is bound by residues 29-32 (TLGP), 86-90 (DGTTT), Gly-413, 478-480 (NAL), and Asp-494.

Belongs to the chaperonin (HSP60) family. As to quaternary structure, forms a cylinder of 14 subunits composed of two heptameric rings stacked back-to-back. Interacts with the co-chaperonin GroES.

It is found in the cytoplasm. The catalysed reaction is ATP + H2O + a folded polypeptide = ADP + phosphate + an unfolded polypeptide.. Functionally, together with its co-chaperonin GroES, plays an essential role in assisting protein folding. The GroEL-GroES system forms a nano-cage that allows encapsulation of the non-native substrate proteins and provides a physical environment optimized to promote and accelerate protein folding. In Lachnoclostridium phytofermentans (strain ATCC 700394 / DSM 18823 / ISDg) (Clostridium phytofermentans), this protein is Chaperonin GroEL.